The primary structure comprises 278 residues: Truncated FRIGIDA-like protein 1 (278 aa).

A coiled-coil region spans residues 1-36; the sequence is MTASETIATAINQIDEKKEKLKKAFDDLQAHRSLLS.

It belongs to the Frigida family.

In terms of biological role, truncated inactive FRIGIDA-like 1 protein. The chain is Truncated FRIGIDA-like protein 1 (FRL1) from Arabidopsis thaliana (Mouse-ear cress).